Here is a 163-residue protein sequence, read N- to C-terminus: MAFDFARATKYFLMWDFIKGFGLGMRYFVSPKPTLNYPHEKGPLSPRFRGEHALRRYPNGEERCIACKLCEAVCPAQAITIDAERREDGSRRTTRYDIDMTKCIYCGFCQEACPVDAIVEGPNFEYATETREELFYDKQKLLANGERWEAEIARNLQLDAPYR.

2 4Fe-4S ferredoxin-type domains span residues 54–84 (LRRY…IDAE) and 94–123 (TRYD…EGPN). 8 residues coordinate [4Fe-4S] cluster: C64, C67, C70, C74, C103, C106, C109, and C113.

It belongs to the complex I 23 kDa subunit family. NDH-1 is composed of at least 14 different subunits, Nqo1 to Nqo14. The complex has a L-shaped structure, with the hydrophobic arm (subunits Nqo7, Nqo8, Nqo10 to Nqo14) embedded in the inner membrane and the hydrophilic peripheral arm (subunits Nqo1 to Nqo6, Nqo9) protruding into the bacterial cytoplasm. The hydrophilic domain contains all the redox centers. It depends on [4Fe-4S] cluster as a cofactor.

It is found in the cell inner membrane. It carries out the reaction a quinone + NADH + 5 H(+)(in) = a quinol + NAD(+) + 4 H(+)(out). NDH-1 shuttles electrons from NADH, via FMN and iron-sulfur (Fe-S) centers, to quinones in the respiratory chain. The immediate electron acceptor for the enzyme in this species is believed to be ubiquinone. Couples the redox reaction to proton translocation (for every two electrons transferred, four hydrogen ions are translocated across the cytoplasmic membrane), and thus conserves the redox energy in a proton gradient. This is NADH-quinone oxidoreductase subunit 9 from Paracoccus denitrificans.